Reading from the N-terminus, the 364-residue chain is Methylenetetrahydrofolate--tRNA-(uracil-5-)-methyltransferase TrmFO (364 aa).

11 to 16 (GAGLAG) is a binding site for FAD. Residues 335 to 352 (SYLNQPCSSANDPTSSLL) show a composition bias toward polar residues. A disordered region spans residues 335-364 (SYLNQPCSSANDPTSSLLDRSPAQRDIPLQ).

Belongs to the MnmG family. TrmFO subfamily. It depends on FAD as a cofactor.

The protein resides in the cytoplasm. It catalyses the reaction uridine(54) in tRNA + (6R)-5,10-methylene-5,6,7,8-tetrahydrofolate + NADH + H(+) = 5-methyluridine(54) in tRNA + (6S)-5,6,7,8-tetrahydrofolate + NAD(+). The enzyme catalyses uridine(54) in tRNA + (6R)-5,10-methylene-5,6,7,8-tetrahydrofolate + NADPH + H(+) = 5-methyluridine(54) in tRNA + (6S)-5,6,7,8-tetrahydrofolate + NADP(+). In terms of biological role, catalyzes the folate-dependent formation of 5-methyl-uridine at position 54 (M-5-U54) in all tRNAs. The polypeptide is Methylenetetrahydrofolate--tRNA-(uracil-5-)-methyltransferase TrmFO (Prochlorococcus marinus (strain MIT 9313)).